Here is a 400-residue protein sequence, read N- to C-terminus: Flavo-diiron protein FprA2 (400 aa).

Positions Gly32–Ala216 are zinc metallo-hydrolase. Residues His79, Glu81, Asp83, His147, Asp166, and His226 each contribute to the Fe cation site. Residues Ile257 to Ala397 enclose the Flavodoxin-like domain. FMN-binding positions include Ser263–Asn267 and Ala345–Gln372.

This sequence in the N-terminal section; belongs to the zinc metallo-hydrolase group 3 family. As to quaternary structure, homotetramer. FMN is required as a cofactor. It depends on Fe cation as a cofactor.

The catalysed reaction is 2 NADH + O2 + 2 H(+) = 2 NAD(+) + 2 H2O. In terms of biological role, catalyzes the four-electron reduction of molecular oxygen to water. In fact, functions as the terminal component of an NADH oxidase (NADH:O(2) oxidoreductase) when using NADH:rubredoxin oxidoreductase (NROR) and rubredoxin (Rd) as electron transport intermediaries between NADH and FDP. Is thus able to reductively scavenge intracellular dioxygen and is part of an oxidative stress defense system in C.acetobutylicum, an obligate anaerobic bacterium. Can also serve as the terminal component of an NADH:nitric oxide oxidoreductase (NOR) with a catalytic efficiency comparable to that of its NADH oxidase activity, and therefore might have an in vivo role in scavenging nitric oxide. This Clostridium acetobutylicum (strain ATCC 824 / DSM 792 / JCM 1419 / IAM 19013 / LMG 5710 / NBRC 13948 / NRRL B-527 / VKM B-1787 / 2291 / W) protein is Flavo-diiron protein FprA2 (fprA2).